An 851-amino-acid polypeptide reads, in one-letter code: MTKTNISPGMQQYLDIKKDYPDAFLLFRMGDFYELFYEDAVKAAQLLEIGLTSRNKNAENPIPMAGVPHHSAQQYIDVLIELGYKVAVAEQMEDPKQAVGVVKREVVQVITPGTVVDSAKPDSANNFLVAVDFDGCRYGLAYMDVSTGEFCVTDLADFTSVRSEIQNLKAKEVLLGFDLSEEEQTILVKQMNLLLSYEETVYEDKSLIDGQLTTVELTAAGKLLQYVHKTQMRELSHLQALVHYEIKDYLQMSYATKSSLDLVENARTNKKHGSLYWLLDETKTAMGMRLLRSWIDRPLVSKEAILERQEIIQVFLNAFIERTDLSNSLKGVYDIERLSSRVSFGKANPKDLLQLGYTLAQVPYIKAILESFDSPCVDKLVNDIDSLPELEYLIRTAIDPDAPATISEGSIIRTGFDERLDHYRKVMREGTGWIADIEAKERQESGINNLKIDYNKKDGYYFHVTNSNLSLVPEHFFRKATLKNSERYGTAELAKIEGQMLEAREESSSLEYDIFMCIRAQVETYINRLQKLAKTLATVDVLQSLAVVAETNHYIRPQFNDNHVITIQEGRHAVVEKVMGVQEYIPNSISFDQQTSIQLITGPNMSGKSTYMRQLALTVIMAQMGSFVAADHVDLPLFDAIFTRIGAADDLISGQSTFMVEMMEANQAIKRASDNSLILFDELGRGTATYDGMALAQAIIEYIHDRVGAKTIFATHYHELTDLSTKLTSLVNVHVATLEKDGDVTFLHKIAEGPADKSYGIHVAKIAGLPKSLLKRADEVLTRLETQSRSTEIMSVPPQVESSSAVRQGQLSLFGDDEKAHEIRQALEAIDVMNMTPFQAMTTLYELKKLL.

602–609 contributes to the ATP binding site; that stretch reads GPNMSGKS.

It belongs to the DNA mismatch repair MutS family.

This protein is involved in the repair of mismatches in DNA. It is possible that it carries out the mismatch recognition step. This protein has a weak ATPase activity. In Streptococcus pyogenes serotype M12 (strain MGAS2096), this protein is DNA mismatch repair protein MutS.